Here is a 316-residue protein sequence, read N- to C-terminus: L-lactate dehydrogenase (316 aa).

Residues V15, D37, K42, Y68, and 82 to 83 (GL) contribute to the NAD(+) site. Substrate-binding positions include Q85, R91, and 123–126 (NPVD). Residues 121–123 (ASN) and T146 each bind NAD(+). A substrate-binding site is contributed by 151-154 (DTSR). 2 residues coordinate beta-D-fructose 1,6-bisphosphate: R156 and H171. H178 (proton acceptor) is an active-site residue. Y222 bears the Phosphotyrosine mark. T231 provides a ligand contact to substrate.

The protein belongs to the LDH/MDH superfamily. LDH family. Homotetramer.

The protein resides in the cytoplasm. The catalysed reaction is (S)-lactate + NAD(+) = pyruvate + NADH + H(+). Its pathway is fermentation; pyruvate fermentation to lactate; (S)-lactate from pyruvate: step 1/1. With respect to regulation, allosterically activated by fructose 1,6-bisphosphate (FBP). Its function is as follows. Catalyzes the conversion of lactate to pyruvate. This Borreliella burgdorferi (strain ATCC 35210 / DSM 4680 / CIP 102532 / B31) (Borrelia burgdorferi) protein is L-lactate dehydrogenase.